Consider the following 431-residue polypeptide: MNDYLEIIDVVARQILDSRCFPTVEVEVYLEDGTIGRAAVPSGASTGMYEAVELRDGDKDKYLGKGVLTAVQNVNDTIAEALIGCNVFDQPYIDKMLIELDGTDNKGKLGANAILGVSLAVANAAANALGLSLYKYVGGVNAKVLPVPMMNIINGGSHADNSVDLQEFMIMPVGATSFTEALRMCAEVYHTLKNTLKDKGYATGLGDEGGFAPNLKSNAEAIDVIIEAITKAGYKAGEDMFIAIDAASSEYYKDGKYVLENEGKTLTSAEMVDFFEDWVNKYPIISIEDGMAEEDWDGWKLLNERLGKKVQLVGDDLFVTNTERLEKGIEIGAANSILIKLNQIGTLTETLNAIEMANRAGYTAVISHRSGETEDTTISDLVVAVNAGQIKTGAPARSERVAKYNQLLRIEEELEDVAEYRGKKAFFNIKK.

Glutamine 166 contributes to the (2R)-2-phosphoglycerate binding site. Glutamate 208 serves as the catalytic Proton donor. Mg(2+) is bound by residues aspartate 245, glutamate 288, and aspartate 315. Lysine 340, arginine 369, serine 370, and lysine 391 together coordinate (2R)-2-phosphoglycerate. The active-site Proton acceptor is lysine 340.

The protein belongs to the enolase family. Mg(2+) serves as cofactor.

It is found in the cytoplasm. It localises to the secreted. The protein localises to the cell surface. The enzyme catalyses (2R)-2-phosphoglycerate = phosphoenolpyruvate + H2O. Its pathway is carbohydrate degradation; glycolysis; pyruvate from D-glyceraldehyde 3-phosphate: step 4/5. In terms of biological role, catalyzes the reversible conversion of 2-phosphoglycerate (2-PG) into phosphoenolpyruvate (PEP). It is essential for the degradation of carbohydrates via glycolysis. This chain is Enolase, found in Clostridium botulinum (strain Eklund 17B / Type B).